Here is a 333-residue protein sequence, read N- to C-terminus: MRLFREIAANDPGPTGRMKNMKTFTTALATGVLALCPLAALADSSDPIVIPIHNWSSQIVMSNVVGQIFEEMGVAVEFVTTDSQAVYESVRLGDVTLELEVWEGAFGASFRAALEKGGIVDVGDHDAVTREDWWYPMWTKDACPGLPDWKALNDCAAVFATAETGDKGRYLDGPVDWLKHGKERVEALGMNFEVINAGSAAALWAEIGAAEADKRPVVVFNWTPNFAEAVWPGEFVEFPEWVDGCDKDPAVGPNPDALYDCGNPATGYLKKAAWEGMEAKWPDAYAVLTRISFTNPQIAEMAKLVDVDEMEPDEAAEAWLEANEDVWRPWLDG.

The signal sequence occupies residues 1–42 (MRLFREIAANDPGPTGRMKNMKTFTTALATGVLALCPLAALA). 5 residues coordinate trimethylamine N-oxide: Trp55, Trp102, Glu131, Trp177, and Trp222. Ca(2+) contacts are provided by Pro249, Val251, Asn254, Ala257, and Asp260.

The complex is probably composed of two ATP-binding proteins (TmoW), two transmembrane proteins (TmoV) and a solute-binding protein (TmoX). Monomer in solution, but forms homodimers in crystals.

It is found in the periplasm. Binds a Ca(2+) ion, which has little effect on either the binding affinity or the secondary structure, but plays an important role in maintaining the stability of TmoX. It may modulate the protein stability in response to biological needs and environmental changes. Thermostability is dramatically decreased when Ca(2+) is removed by EDTA. Its function is as follows. Part of the ABC transporter complex TmoXWV involved in trimethylamine N-oxide (TMAO) import. Is specific for TMAO and essential for TMAO metabolism. Binds TMAO with high affinity. In vitro, also presents a high binding affinity for choline, however this transporter seems specific for TMAO and the choline-binding affinity presented by recombinant TmoX may not make physiological sense. This is Trimethylamine N-oxide-binding protein from Ruegeria pomeroyi (strain ATCC 700808 / DSM 15171 / DSS-3) (Silicibacter pomeroyi).